Consider the following 693-residue polypeptide: Ion-translocating oxidoreductase complex subunit C (693 aa).

2 4Fe-4S ferredoxin-type domains span residues 368–397 (MEPVAEEQSCIRCSKCADACPAGLLPQQLY) and 407–436 (KARDHHLFDCIECGACAYVCPSNIPLVQYY). 8 residues coordinate [4Fe-4S] cluster: C377, C380, C383, C387, C416, C419, C422, and C426. The segment covering 539–548 (REERVREKQS) has biased composition (basic and acidic residues). The tract at residues 539 to 564 (REERVREKQSQQETPATEVTPEELDP) is disordered.

It belongs to the 4Fe4S bacterial-type ferredoxin family. RnfC subfamily. As to quaternary structure, the complex is composed of six subunits: RnfA, RnfB, RnfC, RnfD, RnfE and RnfG. The cofactor is [4Fe-4S] cluster.

The protein localises to the cell inner membrane. Functionally, part of a membrane-bound complex that couples electron transfer with translocation of ions across the membrane. In Pectobacterium atrosepticum (strain SCRI 1043 / ATCC BAA-672) (Erwinia carotovora subsp. atroseptica), this protein is Ion-translocating oxidoreductase complex subunit C.